We begin with the raw amino-acid sequence, 102 residues long: Small ribosomal subunit protein uS10 (102 aa).

The protein belongs to the universal ribosomal protein uS10 family. As to quaternary structure, part of the 30S ribosomal subunit.

In terms of biological role, involved in the binding of tRNA to the ribosomes. The protein is Small ribosomal subunit protein uS10 of Thiobacillus denitrificans (strain ATCC 25259 / T1).